The chain runs to 122 residues: Small ribosomal subunit protein uS13 (122 aa).

Residues 95 to 116 (GLPVRGQKTKTNARTRKGRRKT) show a composition bias toward basic residues. Residues 95–122 (GLPVRGQKTKTNARTRKGRRKTVGAATK) are disordered.

It belongs to the universal ribosomal protein uS13 family. In terms of assembly, part of the 30S ribosomal subunit. Forms a loose heterodimer with protein S19. Forms two bridges to the 50S subunit in the 70S ribosome.

Located at the top of the head of the 30S subunit, it contacts several helices of the 16S rRNA. In the 70S ribosome it contacts the 23S rRNA (bridge B1a) and protein L5 of the 50S subunit (bridge B1b), connecting the 2 subunits; these bridges are implicated in subunit movement. Contacts the tRNAs in the A and P-sites. The protein is Small ribosomal subunit protein uS13 of Campylobacter concisus (strain 13826).